Here is a 570-residue protein sequence, read N- to C-terminus: Sulfite reductase [NADPH] hemoprotein beta-component (570 aa).

Positions 434, 440, 479, and 483 each coordinate [4Fe-4S] cluster. Position 483 (cysteine 483) interacts with siroheme.

This sequence belongs to the nitrite and sulfite reductase 4Fe-4S domain family. As to quaternary structure, alpha(8)-beta(8). The alpha component is a flavoprotein, the beta component is a hemoprotein. Siroheme is required as a cofactor. It depends on [4Fe-4S] cluster as a cofactor.

The enzyme catalyses hydrogen sulfide + 3 NADP(+) + 3 H2O = sulfite + 3 NADPH + 4 H(+). It functions in the pathway sulfur metabolism; hydrogen sulfide biosynthesis; hydrogen sulfide from sulfite (NADPH route): step 1/1. In terms of biological role, component of the sulfite reductase complex that catalyzes the 6-electron reduction of sulfite to sulfide. This is one of several activities required for the biosynthesis of L-cysteine from sulfate. In Shigella flexneri serotype 5b (strain 8401), this protein is Sulfite reductase [NADPH] hemoprotein beta-component.